A 33-amino-acid polypeptide reads, in one-letter code: Brevinin 2AV (33 aa).

The cysteines at positions 27 and 33 are disulfide-linked.

Expressed by the skin glands.

It localises to the secreted. In terms of biological role, has antibacterial activity. The polypeptide is Brevinin 2AV (Rana arvalis (Moor frog)).